Reading from the N-terminus, the 516-residue chain is Monocarboxylate transporter 12 (516 aa).

The Cytoplasmic portion of the chain corresponds to 1 to 50 (MPSGSHWTANSSKIITWLLEQPGKEEKRKTMAKVNRARSTSPPDGGWGWM). 12 helical membrane-spanning segments follow: residues 51-73 (IVAGCFLVTICTRAVTRCISIFF), 88-108 (AWIHSIVDCVTMLCAPLGSVV), 116-136 (VGIMLGGLLASTGLILSSFAT), 145-165 (LGVLTGLGFALCYSPAIAMVG), 178-198 (IAMSGSGIGTFILAPVVQLLI), 207-227 (LLILGGFVLNLCVCGALMRPI), 283-303 (FVVLAVSVLFMAYGCSPLFVY), 319-339 (AFLMSILGVIDIIGNITFGWL), 350-370 (YVCYLFAVGMDGLCYLCLPML), 377-397 (VPFSCTFGYFDGAYVTLIPVV), 410-430 (ALGVVYFLHAVPYLVSPPIAG), and 440-460 (TAAFLLCGFSMIFSSVLLGFA). The Cytoplasmic segment spans residues 461–516 (RLIKRMRKTQLQFIAKESDPKLQLWTNGSVAYSVARELDQKHGEPVATAVPGYSLT).

The protein belongs to the major facilitator superfamily. Monocarboxylate porter (TC 2.A.1.13) family. Interacts with isoform 2 of BSG; this interaction is required for its localization to the plasma membrane. In terms of tissue distribution, most highly expressed in kidney, followed by retina, lung, heart and testis. Very weakly expressed in brain and liver. Also detected in lens.

The protein localises to the cell membrane. It localises to the basolateral cell membrane. The enzyme catalyses creatine(in) = creatine(out). It catalyses the reaction guanidinoacetate(in) = guanidinoacetate(out). With respect to regulation, creatine uptake is inhibited by carbonyl cyanide 3-chlorophenylhydrazone (CCCP) and by valinomycin. Functionally, functions as a transporter for creatine and as well for its precursor guanidinoacetate. Transport of creatine and GAA is independent of resting membrane potential and extracellular Na(+), Cl(-), or pH. Contributes to the process of creatine biosynthesis and distribution. This Homo sapiens (Human) protein is Monocarboxylate transporter 12.